The sequence spans 401 residues: Lipid-A-disaccharide synthase (401 aa).

The protein belongs to the LpxB family.

It catalyses the reaction a lipid X + a UDP-2-N,3-O-bis[(3R)-3-hydroxyacyl]-alpha-D-glucosamine = a lipid A disaccharide + UDP + H(+). It participates in bacterial outer membrane biogenesis; LPS lipid A biosynthesis. In terms of biological role, condensation of UDP-2,3-diacylglucosamine and 2,3-diacylglucosamine-1-phosphate to form lipid A disaccharide, a precursor of lipid A, a phosphorylated glycolipid that anchors the lipopolysaccharide to the outer membrane of the cell. The polypeptide is Lipid-A-disaccharide synthase (Rhodospirillum centenum (strain ATCC 51521 / SW)).